Consider the following 87-residue polypeptide: Small ribosomal subunit protein uS15c (87 aa).

Belongs to the universal ribosomal protein uS15 family. Part of the 30S ribosomal subunit.

The protein resides in the plastid. The protein localises to the chloroplast. The polypeptide is Small ribosomal subunit protein uS15c (rps15) (Amborella trichopoda).